The chain runs to 419 residues: tRNA modification GTPase MnmE (419 aa).

(6S)-5-formyl-5,6,7,8-tetrahydrofolate-binding residues include arginine 2, glutamate 59, and arginine 99. Residues 197 to 343 (GLSVVIAGPP…LHTMIVEMAR (147 aa)) enclose the TrmE-type G domain. Asparagine 207 serves as a coordination point for K(+). GTP-binding positions include 207–212 (NAGKST), 226–232 (SPVAGTT), and 251–254 (DTAG). Serine 211 provides a ligand contact to Mg(2+). K(+) contacts are provided by serine 226, valine 228, and threonine 231. A Mg(2+)-binding site is contributed by threonine 232. (6S)-5-formyl-5,6,7,8-tetrahydrofolate is bound at residue lysine 419.

It belongs to the TRAFAC class TrmE-Era-EngA-EngB-Septin-like GTPase superfamily. TrmE GTPase family. In terms of assembly, homodimer. Heterotetramer of two MnmE and two MnmG subunits. Requires K(+) as cofactor.

It localises to the cytoplasm. Functionally, exhibits a very high intrinsic GTPase hydrolysis rate. Involved in the addition of a carboxymethylaminomethyl (cmnm) group at the wobble position (U34) of certain tRNAs, forming tRNA-cmnm(5)s(2)U34. This is tRNA modification GTPase MnmE from Sphingopyxis alaskensis (strain DSM 13593 / LMG 18877 / RB2256) (Sphingomonas alaskensis).